A 191-amino-acid polypeptide reads, in one-letter code: Adenylate kinase (191 aa).

12–17 (GSGKTT) is a binding site for ATP. An NMP region spans residues 33 to 62 (STGDLLRAEVASGSELGKLIDSFISKGNLV). Residues Thr-34, Arg-39, 60-62 (NLV), 87-90 (GYPR), and Gln-94 contribute to the AMP site. Residues 129-135 (GRARGAD) form an LID region. Residue Arg-130 participates in ATP binding. Positions 132 and 144 each coordinate AMP. Arg-172 contributes to the ATP binding site.

This sequence belongs to the adenylate kinase family. Monomer.

It is found in the cytoplasm. It carries out the reaction AMP + ATP = 2 ADP. It functions in the pathway purine metabolism; AMP biosynthesis via salvage pathway; AMP from ADP: step 1/1. Functionally, catalyzes the reversible transfer of the terminal phosphate group between ATP and AMP. Plays an important role in cellular energy homeostasis and in adenine nucleotide metabolism. This chain is Adenylate kinase, found in Campylobacter fetus subsp. fetus (strain 82-40).